An 82-amino-acid chain; its full sequence is Probable acyl carrier protein IacP (82 aa).

In terms of domain architecture, Carrier spans 3 to 78 (MDIEARVKKV…DICRVVKKSL (76 aa)). S38 bears the O-(pantetheine 4'-phosphoryl)serine mark.

Post-translationally, 4'-phosphopantetheine is transferred from CoA to a specific serine of apo-IacP.

Its subcellular location is the cytoplasm. Functionally, acyl carrier protein. This chain is Probable acyl carrier protein IacP (iacP), found in Salmonella typhimurium (strain SL1344).